Consider the following 1050-residue polypeptide: Elongation factor 3 (1050 aa).

Residues valine 43 and histidine 45 each coordinate ADP. The stretch at aspartate 46–leucine 83 is one HEAT 1 repeat. Serine 86 serves as a coordination point for ADP. HEAT repeat units follow at residues proline 89–proline 126, threonine 127–alanine 165, leucine 169–asparagine 206, aspartate 208–methionine 244, alanine 245–aspartate 282, and proline 288–valine 326. ADP is bound by residues threonine 395, histidine 399, and glutamate 400. ABC transporter domains lie at aspartate 429 to leucine 646 and valine 672 to aspartate 998. Residues asparagine 708, glutamate 927, asparagine 930, and histidine 956 each contribute to the ADP site. A disordered region spans residues glycine 980 to phenylalanine 1050. The span at alanine 1013–lysine 1037 shows a compositional bias: basic residues.

This sequence belongs to the ABC transporter superfamily. ABCF family. EF3 subfamily. As to quaternary structure, monomer.

It localises to the cytoplasm. The catalysed reaction is ATP + H2O = ADP + phosphate + H(+). It functions in the pathway protein biosynthesis; polypeptide chain elongation. In terms of biological role, ribosome-dependent ATPase that functions in cytoplasmic translation elongation. Required for the ATP-dependent release of deacylated tRNA from the ribosomal E-site during protein biosynthesis. Stimulates the eEF1A-dependent binding of aminoacyl-tRNA to the ribosomal A-site, which has reduced affinity for tRNA as long as the E-site is occupied. Assists translation termination by stimulating the release of nascent protein from the ribosome by release factors. In Candida albicans (strain SC5314 / ATCC MYA-2876) (Yeast), this protein is Elongation factor 3 (CEF3).